A 269-amino-acid polypeptide reads, in one-letter code: HTH-type transcriptional activator ArnR1 (269 aa).

Residues 1–217 lie on the Cytoplasmic side of the membrane; the sequence is MSSMNKRVFD…LLKLTGSYRY (217 aa). Residues 42 to 65 constitute a DNA-binding region (H-T-H motif); the sequence is TTEISQTINTSRKSIIDAIRKLVD. The chain crosses the membrane as a helical span at residues 218-238; it reads EIALTKVMLFNVISIPVLMYL. The Extracellular portion of the chain corresponds to 239-241; the sequence is KDQ. A helical membrane pass occupies residues 242 to 262; that stretch reads LGILEAIWLYVIILLPLLSIF. Over 263–269 the chain is Cytoplasmic; that stretch reads AEIFNRI.

It localises to the cell membrane. Its function is as follows. Involved in regulation of archaellar gene expression. May activate flaB transcription upon nutrient starvation by acting on the flaB promoter. The chain is HTH-type transcriptional activator ArnR1 from Sulfolobus acidocaldarius (strain ATCC 33909 / DSM 639 / JCM 8929 / NBRC 15157 / NCIMB 11770).